The following is a 428-amino-acid chain: C4-dicarboxylate transport protein (428 aa).

Transmembrane regions (helical) follow at residues 8-28 (VLYV…HYYP), 44-64 (LIKM…IAGM), 78-98 (LLYF…ATHI), 148-168 (GEIL…AHLG), 184-204 (VLFG…FGAM), 222-242 (LIGT…GAIA), 307-327 (IYMT…LTWM), and 355-375 (AATL…ILGI).

The protein belongs to the dicarboxylate/amino acid:cation symporter (DAACS) (TC 2.A.23) family.

The protein localises to the cell inner membrane. Functionally, responsible for the transport of dicarboxylates such as succinate, fumarate, and malate from the periplasm across the membrane. This chain is C4-dicarboxylate transport protein, found in Burkholderia mallei (strain ATCC 23344).